Consider the following 190-residue polypeptide: Large ribosomal subunit protein uL5 (190 aa).

The protein belongs to the universal ribosomal protein uL5 family. Part of the 50S ribosomal subunit; part of the 5S rRNA/L5/L18/L25 subcomplex. Contacts the 5S rRNA and the P site tRNA. Forms a bridge to the 30S subunit in the 70S ribosome.

In terms of biological role, this is one of the proteins that bind and probably mediate the attachment of the 5S RNA into the large ribosomal subunit, where it forms part of the central protuberance. In the 70S ribosome it contacts protein S13 of the 30S subunit (bridge B1b), connecting the 2 subunits; this bridge is implicated in subunit movement. Contacts the P site tRNA; the 5S rRNA and some of its associated proteins might help stabilize positioning of ribosome-bound tRNAs. This Corynebacterium efficiens (strain DSM 44549 / YS-314 / AJ 12310 / JCM 11189 / NBRC 100395) protein is Large ribosomal subunit protein uL5.